A 140-amino-acid polypeptide reads, in one-letter code: Organic hydroperoxide resistance protein-like (140 aa).

It belongs to the OsmC/Ohr family.

The protein is Organic hydroperoxide resistance protein-like of Staphylococcus aureus (strain bovine RF122 / ET3-1).